The following is a 201-amino-acid chain: Acireductone dioxygenase 2 (201 aa).

Positions 83, 85, 89, and 129 each coordinate Fe(2+). Ni(2+)-binding residues include histidine 83, histidine 85, glutamate 89, and histidine 129.

This sequence belongs to the acireductone dioxygenase (ARD) family. Fe(2+) serves as cofactor. Requires Ni(2+) as cofactor.

The protein resides in the cytoplasm. It localises to the nucleus. The catalysed reaction is 1,2-dihydroxy-5-(methylsulfanyl)pent-1-en-3-one + O2 = 4-methylsulfanyl-2-oxobutanoate + formate + 2 H(+). It catalyses the reaction 1,2-dihydroxy-5-(methylsulfanyl)pent-1-en-3-one + O2 = 3-(methylsulfanyl)propanoate + CO + formate + 2 H(+). Its pathway is amino-acid biosynthesis; L-methionine biosynthesis via salvage pathway; L-methionine from S-methyl-5-thio-alpha-D-ribose 1-phosphate: step 5/6. Its function is as follows. Catalyzes 2 different reactions between oxygen and the acireductone 1,2-dihydroxy-3-keto-5-methylthiopentene (DHK-MTPene) depending upon the metal bound in the active site. Fe-containing acireductone dioxygenase (Fe-ARD) produces formate and 2-keto-4-methylthiobutyrate (KMTB), the alpha-ketoacid precursor of methionine in the methionine recycle pathway. Ni-containing acireductone dioxygenase (Ni-ARD) produces methylthiopropionate, carbon monoxide and formate, and does not lie on the methionine recycle pathway. The protein is Acireductone dioxygenase 2 of Coprinopsis cinerea (strain Okayama-7 / 130 / ATCC MYA-4618 / FGSC 9003) (Inky cap fungus).